We begin with the raw amino-acid sequence, 241 residues long: GTP cyclohydrolase III (241 aa).

The protein belongs to the archaeal-type GTP cyclohydrolase family.

It carries out the reaction GTP + 3 H2O = 2-amino-5-formylamino-6-(5-phospho-D-ribosylamino)pyrimidin-4(3H)-one + 2 phosphate + 2 H(+). Its function is as follows. Catalyzes the formation of 2-amino-5-formylamino-6-ribofuranosylamino-4(3H)-pyrimidinone ribonucleotide monophosphate and inorganic phosphate from GTP. Also has an independent pyrophosphate phosphohydrolase activity. This Aeropyrum pernix (strain ATCC 700893 / DSM 11879 / JCM 9820 / NBRC 100138 / K1) protein is GTP cyclohydrolase III.